The chain runs to 1305 residues: Cyclin-G-associated kinase (1305 aa).

S2 is modified (N-acetylserine). 2 positions are modified to phosphoserine: S2 and S16. In terms of domain architecture, Protein kinase spans 40 to 315; that stretch reads LRVRRVLAEG…IAEVVRQLQE (276 aa). Residue D173 is the Proton acceptor of the active site. The segment at 332 to 354 is disordered; the sequence is LEQNGGYGNSGPSRAQPPSGGPV. The 168-residue stretch at 397-564 folds into the Phosphatase tensin-type domain; the sequence is SVANYAKGDL…EYVCDMVAEE (168 aa). S454 is modified (phosphoserine). The 139-residue stretch at 570-708 folds into the C2 tensin-type domain; that stretch reads SKPMLVKSVV…FQVNLEVEVE (139 aa). The tract at residues 747 to 856 is disordered; that stretch reads FGKPELPRQP…TPRLAAGTRQ (110 aa). S768 carries the post-translational modification Phosphoserine. T774 bears the Phosphothreonine mark. Polar residues predominate over residues 776–789; sequence SDSPQSSSTDTNHF. The residue at position 781 (S781) is a Phosphoserine. T792 carries the post-translational modification Phosphothreonine. Positions 805 to 817 are enriched in polar residues; that stretch reads VDNTSPKESQSNL. Residues S809, S824, and S827 each carry the phosphoserine modification. The segment covering 822–832 has biased composition (acidic residues); it reads DGSEVSDEEEA. The segment covering 836-848 has biased composition (basic and acidic residues); it reads SEERKPGAGEDTP. Phosphoserine is present on S938. Residues 1044–1141 form a disordered region; it reads LPGPASMPVP…PQAKPAPRAS (98 aa). Polar residues predominate over residues 1105–1131; that stretch reads VGTSATTHKSNSSWQTTRPTAPGTSWP. Omega-N-methylarginine is present on R1122. S1171 carries the post-translational modification Phosphoserine. The region spanning 1241 to 1305 is the J domain; the sequence is SRWTPVSMAD…FENQGSRPLF (65 aa).

Belongs to the protein kinase superfamily. Ser/Thr protein kinase family.

Its subcellular location is the cytoplasm. The protein resides in the perinuclear region. The protein localises to the golgi apparatus. It is found in the trans-Golgi network. It localises to the cell junction. Its subcellular location is the focal adhesion. The protein resides in the cytoplasmic vesicle. The protein localises to the clathrin-coated vesicle. The enzyme catalyses L-seryl-[protein] + ATP = O-phospho-L-seryl-[protein] + ADP + H(+). It catalyses the reaction L-threonyl-[protein] + ATP = O-phospho-L-threonyl-[protein] + ADP + H(+). Associates with cyclin G and CDK5. Seems to act as an auxilin homolog that is involved in the uncoating of clathrin-coated vesicles by Hsc70 in non-neuronal cells. Expression oscillates slightly during the cell cycle, peaking at G1. May play a role in clathrin-mediated endocytosis and intracellular trafficking, and in the dynamics of clathrin assembly/disassembly. The sequence is that of Cyclin-G-associated kinase from Rattus norvegicus (Rat).